The primary structure comprises 35 residues: Conotoxin Cl6.16 (35 aa).

3 cysteine pairs are disulfide-bonded: Cys-10-Cys-22, Cys-16-Cys-27, and Cys-21-Cys-34.

As to expression, expressed by the venom duct.

Its subcellular location is the secreted. This chain is Conotoxin Cl6.16, found in Californiconus californicus (California cone).